The following is a 180-amino-acid chain: ATP-dependent protease subunit HslV (180 aa).

Residue Thr7 is part of the active site. Ala165, Cys168, and Thr171 together coordinate Na(+).

It belongs to the peptidase T1B family. HslV subfamily. As to quaternary structure, a double ring-shaped homohexamer of HslV is capped on each side by a ring-shaped HslU homohexamer. The assembly of the HslU/HslV complex is dependent on binding of ATP.

It localises to the cytoplasm. The enzyme catalyses ATP-dependent cleavage of peptide bonds with broad specificity.. With respect to regulation, allosterically activated by HslU binding. Functionally, protease subunit of a proteasome-like degradation complex believed to be a general protein degrading machinery. The polypeptide is ATP-dependent protease subunit HslV (Geobacillus sp. (strain WCH70)).